The following is a 1199-amino-acid chain: DNA-directed RNA polymerase subunit beta (1199 aa).

A disordered region spans residues 1175 to 1199 (EEKKAHEAAAQATDGKSANSTDDKK). Over residues 1188-1199 (DGKSANSTDDKK) the composition is skewed to polar residues.

The protein belongs to the RNA polymerase beta chain family. In terms of assembly, the RNAP catalytic core consists of 2 alpha, 1 beta, 1 beta' and 1 omega subunit. When a sigma factor is associated with the core the holoenzyme is formed, which can initiate transcription.

The catalysed reaction is RNA(n) + a ribonucleoside 5'-triphosphate = RNA(n+1) + diphosphate. DNA-dependent RNA polymerase catalyzes the transcription of DNA into RNA using the four ribonucleoside triphosphates as substrates. The protein is DNA-directed RNA polymerase subunit beta of Lacticaseibacillus casei (strain BL23) (Lactobacillus casei).